Consider the following 351-residue polypeptide: Signal recognition particle receptor FtsY (351 aa).

GTP contacts are provided by residues 156-163, 238-242, and 302-305; these read GINGTGKT, DTAGR, and TKLD.

It belongs to the GTP-binding SRP family. FtsY subfamily. In terms of assembly, part of the signal recognition particle protein translocation system, which is composed of SRP and FtsY. SRP is a ribonucleoprotein composed of Ffh and a 4.5S RNA molecule.

The protein resides in the cell membrane. The protein localises to the cytoplasm. The enzyme catalyses GTP + H2O = GDP + phosphate + H(+). In terms of biological role, involved in targeting and insertion of nascent membrane proteins into the cytoplasmic membrane. Acts as a receptor for the complex formed by the signal recognition particle (SRP) and the ribosome-nascent chain (RNC). Interaction with SRP-RNC leads to the transfer of the RNC complex to the Sec translocase for insertion into the membrane, the hydrolysis of GTP by both Ffh and FtsY, and the dissociation of the SRP-FtsY complex into the individual components. The sequence is that of Signal recognition particle receptor FtsY from Buchnera aphidicola subsp. Schizaphis graminum (strain Sg).